The chain runs to 79 residues: U-actitoxin-Avd8a (79 aa).

An N-terminal signal peptide occupies residues 1-19; it reads MKSLVIVFVVLLGVAMISA. A propeptide spanning residues 20-36 is cleaved from the precursor; sequence NEEELLAILQDQRNDAR.

Belongs to the sea anemone 8 toxin family.

It localises to the secreted. Its subcellular location is the nematocyst. This chain is U-actitoxin-Avd8a, found in Anemonia viridis (Snakelocks anemone).